A 159-amino-acid polypeptide reads, in one-letter code: Prs ADP-ribosylating antitoxin (159 aa).

A sufficient to neutralize toxin region spans residues 99 to 159; the sequence is EDMVEESGET…LAQIQSGAFA (61 aa).

This sequence belongs to the MbcA/ParS/Xre antitoxin family. In terms of assembly, forms heterotetrameric ParS(2)-ParT(2) complexes. The 2 antitoxin fragments do not make contact in the crystal structure.

Its function is as follows. Antitoxin component of a type II toxin-antitoxin (TA) system. Neutralizes the bacteriostatic effect of cognate toxin ParT by inserting into its active site. This Sphingobium sp. (strain YBL2) protein is Prs ADP-ribosylating antitoxin.